A 679-amino-acid chain; its full sequence is UvrABC system protein C (679 aa).

A GIY-YIG domain is found at 65–143 (NSPGVYRMLN…IKRLRPRFNV (79 aa)). The 36-residue stretch at 253–288 (QKVKSHMAEAMNQAAEDLDFERAAIYRDRLAALSHV) folds into the UVR domain.

The protein belongs to the UvrC family. As to quaternary structure, interacts with UvrB in an incision complex.

It localises to the cytoplasm. The UvrABC repair system catalyzes the recognition and processing of DNA lesions. UvrC both incises the 5' and 3' sides of the lesion. The N-terminal half is responsible for the 3' incision and the C-terminal half is responsible for the 5' incision. The chain is UvrABC system protein C from Rhizobium etli (strain ATCC 51251 / DSM 11541 / JCM 21823 / NBRC 15573 / CFN 42).